Consider the following 148-residue polypeptide: Putative nickel-responsive regulator (148 aa).

4 residues coordinate Ni(2+): His76, His87, His89, and Cys95.

Belongs to the transcriptional regulatory CopG/NikR family. The cofactor is Ni(2+).

Functionally, transcriptional regulator. This is Putative nickel-responsive regulator from Rhodopseudomonas palustris (strain ATCC BAA-98 / CGA009).